A 160-amino-acid polypeptide reads, in one-letter code: Phosphopantetheine adenylyltransferase (160 aa).

Residue Thr10 participates in substrate binding. ATP is bound by residues 10–11 and His18; that span reads TF. Residues Lys42, Leu74, and Arg88 each coordinate substrate. ATP-binding positions include 89-91, Glu99, and 124-130; these read GLR and HGFLSST.

Belongs to the bacterial CoaD family. In terms of assembly, homohexamer. The cofactor is Mg(2+).

The protein resides in the cytoplasm. It catalyses the reaction (R)-4'-phosphopantetheine + ATP + H(+) = 3'-dephospho-CoA + diphosphate. It participates in cofactor biosynthesis; coenzyme A biosynthesis; CoA from (R)-pantothenate: step 4/5. Reversibly transfers an adenylyl group from ATP to 4'-phosphopantetheine, yielding dephospho-CoA (dPCoA) and pyrophosphate. The protein is Phosphopantetheine adenylyltransferase of Aliivibrio fischeri (strain MJ11) (Vibrio fischeri).